The following is a 370-amino-acid chain: 5-hydroxytryptamine receptor 5B (370 aa).

The segment at Met-1–Pro-36 is disordered. Over Met-1 to Phe-48 the chain is Extracellular. Residue Asn-5 is glycosylated (N-linked (GlcNAc...) asparagine). A compositionally biased stretch (low complexity) spans Glu-20 to Pro-36. A helical membrane pass occupies residues Ser-49–Val-75. Residues Thr-76–His-88 are Cytoplasmic-facing. A helical transmembrane segment spans residues Asn-89–Ser-115. The Extracellular segment spans residues Ala-116–Cys-127. An intrachain disulfide couples Cys-127 to Cys-205. A helical membrane pass occupies residues His-128–Leu-150. A serotonin-binding site is contributed by Asp-134. Residues Asp-151 to Ser-168 are Cytoplasmic-facing. Residues Arg-169–Pro-189 traverse the membrane as a helical segment. The Extracellular segment spans residues Leu-190–Pro-211. The helical transmembrane segment at Ser-212–Tyr-233 threads the bilayer. Over Trp-234 to Val-300 the chain is Cytoplasmic. The helical transmembrane segment at Gly-301–Ala-325 threads the bilayer. At Cys-326–Ser-327 the chain is on the extracellular side. Residues Leu-328–Thr-352 form a helical membrane-spanning segment. Topologically, residues Ala-353–Arg-370 are cytoplasmic.

Belongs to the G-protein coupled receptor 1 family. In terms of tissue distribution, expressed predominantly in the central nervous system; in the hippocampus, habenula, and the doral raphe.

The protein localises to the cell membrane. G-protein coupled receptor for 5-hydroxytryptamine (serotonin), a biogenic hormone that functions as a neurotransmitter, a hormone and a mitogen. Also functions as a receptor for ergot alkaloid derivatives and other psychoactive substances. Ligand binding causes a conformation change that triggers signaling via guanine nucleotide-binding proteins (G proteins) and modulates the activity of downstream effectors. Htr5b is coupled to G(i)/G(o) G alpha proteins and mediates inhibitory neurotransmission: signaling inhibits adenylate cyclase activity and activates a phosphatidylinositol-calcium second messenger system that regulates the release of Ca(2+) ions from intracellular stores. The sequence is that of 5-hydroxytryptamine receptor 5B from Mus musculus (Mouse).